The sequence spans 52 residues: Proteinase inhibitor (52 aa).

Pyrrolidone carboxylic acid is present on Gln1. 4 disulfides stabilise this stretch: Cys3–Cys40, Cys6–Cys24, Cys7–Cys36, and Cys13–Cys49.

This sequence belongs to the protease inhibitor I20 (potato type II proteinase inhibitor) family.

It is found in the secreted. The protein is Proteinase inhibitor of Solanum melongena (Eggplant).